The primary structure comprises 176 residues: NAD(P)H-quinone oxidoreductase subunit 6, chloroplastic (176 aa).

5 helical membrane passes run 10 to 30, 32 to 52, 61 to 81, 92 to 112, and 152 to 172; these read ILLVFLGSGLILGGLGVVLLT, PISSAFSLGLVLVCISLFYIP, AQLLIYVGAINVLIVFAVMFM, LWTIGDGFTSLVCTSILFSLI, and FYLPFELISIILLVALIGAIA.

Belongs to the complex I subunit 6 family. As to quaternary structure, NDH is composed of at least 16 different subunits, 5 of which are encoded in the nucleus.

It is found in the plastid. It localises to the chloroplast thylakoid membrane. It catalyses the reaction a plastoquinone + NADH + (n+1) H(+)(in) = a plastoquinol + NAD(+) + n H(+)(out). It carries out the reaction a plastoquinone + NADPH + (n+1) H(+)(in) = a plastoquinol + NADP(+) + n H(+)(out). NDH shuttles electrons from NAD(P)H:plastoquinone, via FMN and iron-sulfur (Fe-S) centers, to quinones in the photosynthetic chain and possibly in a chloroplast respiratory chain. The immediate electron acceptor for the enzyme in this species is believed to be plastoquinone. Couples the redox reaction to proton translocation, and thus conserves the redox energy in a proton gradient. The protein is NAD(P)H-quinone oxidoreductase subunit 6, chloroplastic (ndhG) of Chloranthus spicatus (Chulantree).